The sequence spans 438 residues: Enolase (438 aa).

Gln-164 contacts (2R)-2-phosphoglycerate. Glu-206 acts as the Proton donor in catalysis. Mg(2+) contacts are provided by Asp-243, Glu-289, and Asp-316. (2R)-2-phosphoglycerate is bound by residues Lys-341, Arg-370, Ser-371, and Lys-392. Lys-341 functions as the Proton acceptor in the catalytic mechanism.

Belongs to the enolase family. Mg(2+) serves as cofactor.

It localises to the cytoplasm. The protein localises to the secreted. It is found in the cell surface. The catalysed reaction is (2R)-2-phosphoglycerate = phosphoenolpyruvate + H2O. It participates in carbohydrate degradation; glycolysis; pyruvate from D-glyceraldehyde 3-phosphate: step 4/5. Functionally, catalyzes the reversible conversion of 2-phosphoglycerate (2-PG) into phosphoenolpyruvate (PEP). It is essential for the degradation of carbohydrates via glycolysis. In Borrelia garinii subsp. bavariensis (strain ATCC BAA-2496 / DSM 23469 / PBi) (Borreliella bavariensis), this protein is Enolase.